A 514-amino-acid chain; its full sequence is Maturase K (514 aa).

The protein belongs to the intron maturase 2 family. MatK subfamily.

It is found in the plastid. It localises to the chloroplast. Its function is as follows. Usually encoded in the trnK tRNA gene intron. Probably assists in splicing its own and other chloroplast group II introns. The polypeptide is Maturase K (Drosophyllum lusitanicum (Portuguese sundew)).